The chain runs to 282 residues: Bis(5'-nucleosyl)-tetraphosphatase, symmetrical (282 aa).

Belongs to the Ap4A hydrolase family.

The catalysed reaction is P(1),P(4)-bis(5'-adenosyl) tetraphosphate + H2O = 2 ADP + 2 H(+). Functionally, hydrolyzes diadenosine 5',5'''-P1,P4-tetraphosphate to yield ADP. The sequence is that of Bis(5'-nucleosyl)-tetraphosphatase, symmetrical from Burkholderia pseudomallei (strain 1106a).